We begin with the raw amino-acid sequence, 533 residues long: T-complex protein 1 subunit delta (533 aa).

A disordered region spans residues 1–24 (MVVKPAARGMKPQGQAYKDKSKPA).

This sequence belongs to the TCP-1 chaperonin family. Heterooligomeric complex of about 850 to 900 kDa that forms two stacked rings, 12 to 16 nm in diameter.

The protein localises to the cytoplasm. Its function is as follows. Molecular chaperone; assists the folding of proteins upon ATP hydrolysis. Known to play a role, in vitro, in the folding of actin and tubulin. This Ochlerotatus triseriatus (Eastern treehole mosquito) protein is T-complex protein 1 subunit delta.